The primary structure comprises 67 residues: UPF0519 protein C (67 aa).

The segment at 18 to 37 is disordered; that stretch reads KSQANLNSNSTNSPNNVQGL. A compositionally biased stretch (low complexity) spans 22–33; the sequence is NLNSNSTNSPNN.

The protein belongs to the UPF0519 family.

This Dictyostelium discoideum (Social amoeba) protein is UPF0519 protein C.